A 258-amino-acid polypeptide reads, in one-letter code: Polysialic acid transport protein KpsM (258 aa).

Topologically, residues 1–30 (MARSGFEVQKVTVEALFLREIRTRFGKFRL) are cytoplasmic. In terms of domain architecture, ABC transmembrane type-2 spans 30–251 (LGYLWAILEP…FIGLALYRTR (222 aa)). The chain crosses the membrane as a helical span at residues 31–54 (GYLWAILEPSAHLLILLGILGYVM). The Periplasmic portion of the chain corresponds to 55–61 (HRTMPDI). A helical transmembrane segment spans residues 62-81 (SFPVFLLNGLIPFFIFSSIS). The Cytoplasmic portion of the chain corresponds to 82–108 (KRSIGAIEANQGLFNYRPVKPIDTIIA). A helical membrane pass occupies residues 109–132 (RALLETLIYVAVYILLMLIVWMTG). The Periplasmic segment spans residues 133–143 (EYFEITNFLQL). A helical membrane pass occupies residues 144 to 165 (VLTWSLLIILSCGVGLIFMVVG). Residues 166–174 (KTFPEMQKV) are Cytoplasmic-facing. A helical transmembrane segment spans residues 175–195 (LPILLKPLYFISCIMFPLHSI). Residues 196 to 226 (PKQYWSYLLWNPLVHVVELSREAVMPGYISE) are Periplasmic-facing. A helical membrane pass occupies residues 227-247 (GVSLNYLAMFTLVTLFIGLAL). The Cytoplasmic portion of the chain corresponds to 248–258 (YRTREEAMLTS).

Belongs to the ABC-2 integral membrane protein family.

It localises to the cell inner membrane. KpsM and KpsT constitute a system for the transport of polysialic acid across the cytoplasmic membrane. The chain is Polysialic acid transport protein KpsM (kpsM) from Escherichia coli.